Reading from the N-terminus, the 98-residue chain is Toxin ParE1 (98 aa).

Belongs to the RelE toxin family.

In terms of biological role, toxic component of a type II toxin-antitoxin (TA) system. Its toxic effect is neutralized by coexpression with cognate antitoxin ParD1. The chain is Toxin ParE1 (parE1) from Mycobacterium tuberculosis (strain CDC 1551 / Oshkosh).